Here is an 811-residue protein sequence, read N- to C-terminus: MAWLHKLLLTMISVPLKWLVKVNSIPTDIATELGIDNTKPIIYLLRTHSVTDQFALKMSTNSLGLPKPSEPVQIGGKELPACLFLQQPRSLLTRKVKITKIADDVTRLFQLHREHPELDLQIVPVSIFWGRAPGRKLSGWSDIIANQVSPNWLRKFFIVLFLGRDNFVCYSKAVSSRTMADLKGSDEEIGHKLIRLAGTHFHRRRQNLIGPMLLERQELYNAVLGADSVRQAVSDEARSKKQSNHQIQAKAKKYVDEIAADYREGLVRIGDRLLTKIWNKVYNGIEVKHADKVRALAQNGHEIIYVPCHRSHMDYLLLTYVIYHEGLVTPHIAAGINLNFWPIGGILRKCGAFFLRRSFAGNKLYTAVFREYLELLFNKGYSVKYYPEGGRSRTGRLLPPKTGMLAMTLQGLIKGINRPVSIVPVYIGYEHVMEVSSYLKELKGTDKKKESFFQVFSAVRKLKNYGNGFLNFGDPINLSNFLDSEVPDWREAQNLEPDKKPRWLTPAVNTLANDVMGRINQAAAVSGMSLCAMCLLSAKKHAMAQDELERAIDDYLDLLKAAPYSDLSSIPELDGKALVENTLKLNKLEVSQDSFGTIISLKRKNAVALTYYRNNILHLFALPGLVSAIVFAHKGLARPQVISLVGQLYPLLQRELFIYMSHEEAMNYTDRLLSTMIDIGLLRAEDDTLCPPAATSKAFYSFWLLNRSIQETLQRYAAVLTILKKEQTIGRGRLEKQSREFAERLAALHGINSPEFFDKNVLSTFIHALKDNELINASSEGQLQHSDTSEALLASVEELISPEITQRLQQI.

An HXXXXD motif motif is present at residues 308–313 (CHRSHM).

Belongs to the GPAT/DAPAT family.

The protein resides in the cell inner membrane. The enzyme catalyses sn-glycerol 3-phosphate + an acyl-CoA = a 1-acyl-sn-glycero-3-phosphate + CoA. Its pathway is phospholipid metabolism; CDP-diacylglycerol biosynthesis; CDP-diacylglycerol from sn-glycerol 3-phosphate: step 1/3. In Pseudoalteromonas atlantica (strain T6c / ATCC BAA-1087), this protein is Glycerol-3-phosphate acyltransferase.